The following is a 251-amino-acid chain: Aspartate/glutamate leucyltransferase (251 aa).

This sequence belongs to the R-transferase family. Bpt subfamily.

It is found in the cytoplasm. The enzyme catalyses N-terminal L-glutamyl-[protein] + L-leucyl-tRNA(Leu) = N-terminal L-leucyl-L-glutamyl-[protein] + tRNA(Leu) + H(+). The catalysed reaction is N-terminal L-aspartyl-[protein] + L-leucyl-tRNA(Leu) = N-terminal L-leucyl-L-aspartyl-[protein] + tRNA(Leu) + H(+). Functions in the N-end rule pathway of protein degradation where it conjugates Leu from its aminoacyl-tRNA to the N-termini of proteins containing an N-terminal aspartate or glutamate. The chain is Aspartate/glutamate leucyltransferase from Stenotrophomonas maltophilia (strain K279a).